Consider the following 128-residue polypeptide: Early 3 14.7 kDa protein (128 aa).

Belongs to the adenoviridae E3_15 family. As to quaternary structure, may bind to host IKBKG, OPTN and RRAGA.

The protein resides in the host cytoplasm. Its subcellular location is the host nucleus. May prevent Nf-kappaB activation by immune signals like Tumor necrosis factor, presumably by inhibiting NFKB1 dimer DNA-binding. May act directly at the TNF receptor to inhibit signaling. The polypeptide is Early 3 14.7 kDa protein (Human adenovirus C serotype 2 (HAdV-2)).